Reading from the N-terminus, the 543-residue chain is Chaperonin GroEL (543 aa).

ATP contacts are provided by residues 29–32 (TLGP), Lys50, 86–90 (DGTTT), Gly413, 480–482 (NAA), and Asp496. A disordered region spans residues 524–543 (EKPEKKESTPASAGAGDMDF).

Belongs to the chaperonin (HSP60) family. As to quaternary structure, forms a cylinder of 14 subunits composed of two heptameric rings stacked back-to-back. Interacts with the co-chaperonin GroES.

It localises to the cytoplasm. It catalyses the reaction ATP + H2O + a folded polypeptide = ADP + phosphate + an unfolded polypeptide.. Functionally, together with its co-chaperonin GroES, plays an essential role in assisting protein folding. The GroEL-GroES system forms a nano-cage that allows encapsulation of the non-native substrate proteins and provides a physical environment optimized to promote and accelerate protein folding. This Thermus thermophilus (strain ATCC BAA-163 / DSM 7039 / HB27) protein is Chaperonin GroEL.